Here is a 453-residue protein sequence, read N- to C-terminus: MLRILCLALCSLLTGTRADPGALLRLGMDIMNQVQSAMDESHILEKMAAEAGKKQPGMKPIKGITNLKVKDVQLPVITLNFVPGVGIFQCVSTGMTVTGKSFMGGNMEIIVALNITATNRLLRDEETGLPVFKSEGCEVILVNVKTNLPSNMLPKMVNKFLDSTLHKVLPGLMCPAIDAVLVYVNRKWTNLSDPMPVGQMGTVKYVLMSAPATTASYIQLDFSPVVQQQKGKTIKLADAGEALTFPEGYAKGSSQLLLPATFLSAELALLQKSFHVNIQDTMIGELPPQTTKTLARFIPEVAVAYPKSKPLTTQIKIKKPPKVTMKTGKSLLHLHSTLEMFAARWRSKAPMSLFLLEVHFNLKVQYSVHENQLQMATSLDRLLSLSRKSSSIGNFNERELTGFITSYLEEAYIPVVNDVLQVGLPLPDFLAMNYNLAELDIVENALMLDLKLG.

Residues 1–18 (MLRILCLALCSLLTGTRA) form the signal peptide. Asn114 carries N-linked (GlcNAc...) asparagine glycosylation. The cysteines at positions 137 and 174 are disulfide-linked. The N-linked (GlcNAc...) asparagine glycan is linked to Asn190.

It belongs to the BPI/LBP/Plunc superfamily. BPI/LBP family. As to expression, detected at very low levels in normal tonsils, and at higher levels in hypertrophic tonsils.

It is found in the secreted. This is BPI fold-containing family B member 6 (BPIFB6) from Homo sapiens (Human).